A 121-amino-acid chain; its full sequence is NLYQFGKMIFKMTGKSALLSYSDYGCYCGWGGKGKPLDATDRCCFVHDCCYGRVNGCNPKLSTYSYSFQNGDIVCGDDNACLRAVCECDRVAAICFGENLNTYDRKYKDYPSSQCTETEQC.

7 disulfides stabilise this stretch: cysteine 26-cysteine 115, cysteine 28-cysteine 44, cysteine 43-cysteine 95, cysteine 49-cysteine 121, cysteine 50-cysteine 88, cysteine 57-cysteine 81, and cysteine 75-cysteine 86. Ca(2+) is bound by residues tyrosine 27, glycine 29, and glycine 31. Residue histidine 47 is part of the active site. Residue aspartate 48 coordinates Ca(2+). Residue aspartate 89 is part of the active site.

The protein belongs to the phospholipase A2 family. Group II subfamily. D49 sub-subfamily. Ca(2+) is required as a cofactor. In terms of tissue distribution, expressed by the venom gland.

Its subcellular location is the secreted. The enzyme catalyses a 1,2-diacyl-sn-glycero-3-phosphocholine + H2O = a 1-acyl-sn-glycero-3-phosphocholine + a fatty acid + H(+). In terms of biological role, PLA2 catalyzes the calcium-dependent hydrolysis of the 2-acyl groups in 3-sn-phosphoglycerides. The polypeptide is Acidic phospholipase A2 PLA-1 (Eristicophis macmahoni (Leaf-nosed viper)).